Reading from the N-terminus, the 658-residue chain is Carnitine O-palmitoyltransferase 2, mitochondrial (658 aa).

A mitochondrion-targeting transit peptide spans 1 to 25 (MVPRLLLRAWPRGPAVGPGAPSRPL). Residues 26-178 (SAGSGPGQYL…GLLEPEVFHL (153 aa)) lie on the Mitochondrial matrix side of the membrane. Lys-69 is modified (N6-succinyllysine). Lys-79 carries the N6-acetyllysine modification. Residue Lys-85 is modified to N6-succinyllysine. Residues 179–208 (NPAKSDTDTFKRLIRFVPSSLSWYGAYLVN) constitute an intramembrane region (note=Mitochondrial inner membrane). Residues 209–658 (AYPLDMSQYF…DALEGKSIKS (450 aa)) lie on the Mitochondrial matrix side of the membrane. Lys-239 is subject to N6-acetyllysine; alternate. N6-succinyllysine; alternate is present on Lys-239. Lys-305 bears the N6-acetyllysine mark. The Proton acceptor role is filled by His-372. Position 418 is an N6-acetyllysine; alternate (Lys-418). Residue Lys-418 is modified to N6-succinyllysine; alternate. Residues Lys-424 and Lys-439 each carry the N6-succinyllysine modification. 452–464 (GKEFLKKQKLSPD) is a CoA binding site. (R)-carnitine is bound by residues Tyr-486, Ser-488, and Thr-499. An N6-acetyllysine; alternate mark is found at Lys-510 and Lys-544. Residues Lys-510 and Lys-544 each carry the N6-succinyllysine; alternate modification.

This sequence belongs to the carnitine/choline acetyltransferase family.

The protein resides in the mitochondrion inner membrane. The catalysed reaction is (R)-carnitine + hexadecanoyl-CoA = O-hexadecanoyl-(R)-carnitine + CoA. The enzyme catalyses octanoyl-CoA + (R)-carnitine = O-octanoyl-(R)-carnitine + CoA. It catalyses the reaction decanoyl-CoA + (R)-carnitine = O-decanoyl-(R)-carnitine + CoA. It carries out the reaction dodecanoyl-CoA + (R)-carnitine = O-dodecanoyl-R-carnitine + CoA. The catalysed reaction is tetradecanoyl-CoA + (R)-carnitine = O-tetradecanoyl-(R)-carnitine + CoA. The enzyme catalyses (R)-carnitine + octadecanoyl-CoA = O-octadecanoyl-(R)-carnitine + CoA. It catalyses the reaction eicosanoyl-CoA + (R)-carnitine = O-eicosanoyl-(R)-carnitine + CoA. It carries out the reaction (9Z)-tetradecenoyl-CoA + (R)-carnitine = O-(9Z)-tetradecenoyl-(R)-carnitine + CoA. The catalysed reaction is (5Z)-tetradecenoyl-CoA + (R)-carnitine = O-(5Z)-tetradecenoyl-(R)-carnitine + CoA. The enzyme catalyses (R)-carnitine + (9Z)-octadecenoyl-CoA = O-(9Z)-octadecenoyl-(R)-carnitine + CoA. It catalyses the reaction 4,8-dimethylnonanoyl-CoA + (R)-carnitine = O-4,8-dimethylnonanoyl-(R)-carnitine + CoA. It functions in the pathway lipid metabolism; fatty acid beta-oxidation. Functionally, involved in the intramitochondrial synthesis of acylcarnitines from accumulated acyl-CoA metabolites. Reconverts acylcarnitines back into the respective acyl-CoA esters that can then undergo beta-oxidation, an essential step for the mitochondrial uptake of long-chain fatty acids and their subsequent beta-oxidation in the mitochondrion. Active with medium (C8-C12) and long-chain (C14-C18) acyl-CoA esters. The chain is Carnitine O-palmitoyltransferase 2, mitochondrial (CPT2) from Macaca fascicularis (Crab-eating macaque).